A 444-amino-acid polypeptide reads, in one-letter code: Phosphoglucosamine mutase (444 aa).

Catalysis depends on Ser102, which acts as the Phosphoserine intermediate. Residues Ser102, Asp241, Asp243, and Asp245 each coordinate Mg(2+). Ser102 carries the post-translational modification Phosphoserine.

The protein belongs to the phosphohexose mutase family. Mg(2+) is required as a cofactor. In terms of processing, activated by phosphorylation.

It carries out the reaction alpha-D-glucosamine 1-phosphate = D-glucosamine 6-phosphate. Functionally, catalyzes the conversion of glucosamine-6-phosphate to glucosamine-1-phosphate. This chain is Phosphoglucosamine mutase, found in Acidovorax ebreus (strain TPSY) (Diaphorobacter sp. (strain TPSY)).